The primary structure comprises 559 residues: NXPE family member 3 (559 aa).

Positions 1–30 (MWTNFFKLRLFCCLLAVLMVVVLVINVTQV) are cleaved as a signal peptide. N-linked (GlcNAc...) asparagine glycosylation is found at Asn237, Asn292, and Asn346.

This sequence belongs to the NXPE family.

It is found in the secreted. In Homo sapiens (Human), this protein is NXPE family member 3 (NXPE3).